Reading from the N-terminus, the 232-residue chain is Phosphatidylserine decarboxylase proenzyme (232 aa).

Serine 190 acts as the Schiff-base intermediate with substrate; via pyruvic acid in catalysis. Serine 190 carries the pyruvic acid (Ser); by autocatalysis modification.

The protein belongs to the phosphatidylserine decarboxylase family. PSD-A subfamily. As to quaternary structure, heterodimer of a large membrane-associated beta subunit and a small pyruvoyl-containing alpha subunit. Requires pyruvate as cofactor. In terms of processing, is synthesized initially as an inactive proenzyme. Formation of the active enzyme involves a self-maturation process in which the active site pyruvoyl group is generated from an internal serine residue via an autocatalytic post-translational modification. Two non-identical subunits are generated from the proenzyme in this reaction, and the pyruvate is formed at the N-terminus of the alpha chain, which is derived from the carboxyl end of the proenzyme. The post-translation cleavage follows an unusual pathway, termed non-hydrolytic serinolysis, in which the side chain hydroxyl group of the serine supplies its oxygen atom to form the C-terminus of the beta chain, while the remainder of the serine residue undergoes an oxidative deamination to produce ammonia and the pyruvoyl prosthetic group on the alpha chain.

It is found in the cell membrane. It catalyses the reaction a 1,2-diacyl-sn-glycero-3-phospho-L-serine + H(+) = a 1,2-diacyl-sn-glycero-3-phosphoethanolamine + CO2. It participates in phospholipid metabolism; phosphatidylethanolamine biosynthesis; phosphatidylethanolamine from CDP-diacylglycerol: step 2/2. In terms of biological role, catalyzes the formation of phosphatidylethanolamine (PtdEtn) from phosphatidylserine (PtdSer). The polypeptide is Phosphatidylserine decarboxylase proenzyme (Methylocella silvestris (strain DSM 15510 / CIP 108128 / LMG 27833 / NCIMB 13906 / BL2)).